Reading from the N-terminus, the 157-residue chain is Small ribosomal subunit protein uS7 (157 aa).

The protein belongs to the universal ribosomal protein uS7 family. Part of the 30S ribosomal subunit. Contacts proteins S9 and S11.

Its function is as follows. One of the primary rRNA binding proteins, it binds directly to 16S rRNA where it nucleates assembly of the head domain of the 30S subunit. Is located at the subunit interface close to the decoding center, probably blocks exit of the E-site tRNA. The protein is Small ribosomal subunit protein uS7 of Chlamydia abortus (strain DSM 27085 / S26/3) (Chlamydophila abortus).